Reading from the N-terminus, the 141-residue chain is Large ribosomal subunit protein uL11c (141 aa).

Belongs to the universal ribosomal protein uL11 family. Part of the ribosomal stalk of the 50S ribosomal subunit. Interacts with L10 and the large rRNA to form the base of the stalk. L10 forms an elongated spine to which L12 dimers bind in a sequential fashion forming a multimeric L10(L12)X complex.

Its subcellular location is the plastid. The protein resides in the chloroplast. Functionally, forms part of the ribosomal stalk which helps the ribosome interact with GTP-bound translation factors. In Pyropia yezoensis (Susabi-nori), this protein is Large ribosomal subunit protein uL11c.